The sequence spans 83 residues: Hainantoxin-III (83 aa).

The N-terminal stretch at 1 to 21 is a signal peptide; that stretch reads MKASMFLALAGLVLLFVVGYA. A propeptide spanning residues 22–48 is cleaved from the precursor; it reads SESEEKEFPRELLSKIFALDDFKGEER. Intrachain disulfides connect Cys-50/Cys-65, Cys-57/Cys-70, and Cys-64/Cys-77. The residue at position 81 (Leu-81) is a Leucine amide.

This sequence belongs to the neurotoxin 10 (Hwtx-1) family. 15 (Hntx-3) subfamily. Monomer. In terms of tissue distribution, expressed by the venom gland.

Its subcellular location is the secreted. Functionally, selective antagonist of neuronal tetrodotoxin (TTX)-sensitive voltage-gated sodium channels (IC(50)=1270 nM on Nav1.1/SCN1A, 270 nM on Nav1.2/SCN2A, 491 nM on Nav1.3/SCN3A and 232 nM on Nav1.7/SCN9A). This toxin suppress Nav1.7 current amplitude without significantly altering the activation, inactivation, and repriming kinetics. Short extreme depolarizations partially activate the toxin-bound channel, indicating voltage-dependent inhibition of this toxin. This toxin increases the deactivation of the Nav1.7 current after extreme depolarizations. The toxin-Nav1.7 complex is gradually dissociated upon prolonged strong depolarizations in a voltage-dependent manner, and the unbound toxin rebinds to Nav1.7 after a long repolarization. Moreover, analysis of chimeric channels showed that the DIIS3-S4 linker is critical for toxin binding to Nav1.7. These data are consistent with this toxin interacting with Nav1.7 site 4 and trapping the domain II voltage sensor in the closed state. This chain is Hainantoxin-III, found in Cyriopagopus hainanus (Chinese bird spider).